Reading from the N-terminus, the 221-residue chain is Mediator of RNA polymerase II transcription subunit 19a (221 aa).

A disordered region spans residues 101–221 (PVELPPAEKG…DEVGAIRVAG (121 aa)). The segment covering 142–152 (EHKKHKHKHKD) has biased composition (basic residues). Residues 153 to 178 (RSKDKDKDKDRDRKKDKNGHHDSGDH) show a composition bias toward basic and acidic residues. The segment covering 179–188 (SKKHHDKKRK) has biased composition (basic residues).

The protein belongs to the plant Mediator complex subunit 19 family. Component of the Mediator complex. Interacts with FIB2.

It is found in the nucleus. Component of the Mediator complex, a coactivator involved in the regulated transcription of nearly all RNA polymerase II-dependent genes. Mediator functions as a bridge to convey information from gene-specific regulatory proteins to the basal RNA polymerase II transcription machinery. The Mediator complex, having a compact conformation in its free form, is recruited to promoters by direct interactions with regulatory proteins and serves for the assembly of a functional preinitiation complex with RNA polymerase II and the general transcription factors. The protein is Mediator of RNA polymerase II transcription subunit 19a (MED19A) of Arabidopsis thaliana (Mouse-ear cress).